A 309-amino-acid chain; its full sequence is Haloalkane dehalogenase (309 aa).

Positions 37–148 constitute an AB hydrolase-1 domain; it reads PTVLFLHGNP…FERWEDFHQR (112 aa). Asp110 functions as the Nucleophile in the catalytic mechanism. Catalysis depends on Glu134, which acts as the Proton donor. His278 acts as the Proton acceptor in catalysis.

The protein belongs to the haloalkane dehalogenase family. Type 2 subfamily. Monomer.

The catalysed reaction is 1-haloalkane + H2O = a halide anion + a primary alcohol + H(+). Its function is as follows. Catalyzes hydrolytic cleavage of carbon-halogen bonds in halogenated aliphatic compounds, leading to the formation of the corresponding primary alcohols, halide ions and protons. The polypeptide is Haloalkane dehalogenase (Mesorhizobium japonicum (strain LMG 29417 / CECT 9101 / MAFF 303099) (Mesorhizobium loti (strain MAFF 303099))).